A 133-amino-acid chain; its full sequence is Mitochondrial import inner membrane translocase subunit TIM17-3 (133 aa).

Helical transmembrane passes span I15–F35, G63–I83, W90–I105, and S115–P128.

It belongs to the Tim17/Tim22/Tim23 family. As to quaternary structure, component of the TIM17:23 complex at least composed of TIM23, TIM17 and TIM50. The complex interacts with the TIM44 component of the PAM complex. As to expression, expressed in cotyledons, roots, flowers and leaves.

The protein resides in the mitochondrion inner membrane. Essential component of the TIM17:23 complex, a complex that mediates the translocation of transit peptide-containing proteins across the mitochondrial inner membrane. Links the inner and outer membranes. This chain is Mitochondrial import inner membrane translocase subunit TIM17-3 (TIM17-3), found in Arabidopsis thaliana (Mouse-ear cress).